The primary structure comprises 201 residues: Ras-related protein Rab-9A (201 aa).

An N-acetylalanine modification is found at Ala2. Gly17 provides a ligand contact to GDP. Positions 17, 18, 19, 20, 21, 22, 34, 38, and 39 each coordinate GTP. 4 residues coordinate GDP: Gly19, Lys20, Ser21, and Ser22. Ser21 contributes to the Mg(2+) binding site. The short motif at 31 to 42 (KFDTQLFHTIGV) is the Switch 1 element. Mg(2+) is bound by residues Thr39 and Asp62. Positions 64 to 78 (AGQERFRSLRTPFYR) match the Switch 2 motif. The GTP site is built by Gly65, Asn124, Lys125, and Asp127. Residues Asn124, Lys125, Asp127, Ala155, and Lys156 each contribute to the GDP site. Lys156 contributes to the GTP binding site. Ser179 carries the phosphoserine modification. Thr187 is modified (phosphothreonine). 2 S-geranylgeranyl cysteine lipidation sites follow: Cys200 and Cys201.

It belongs to the small GTPase superfamily. Rab family. As to quaternary structure, interacts (preferentially in its GTP-bound form) with GCC2 (via its GRIP domain). Interacts (GTP-bound form) with SGSM1; the GDP-bound form has much lower affinity for SGSM1. Interacts with SGSM2. The GTP-bound form but not the GDP-bound form interacts with HPS4 and the BLOC-3 complex (heterodimer of HPS1 and HPS4) but does not interact with HPS1 alone. Interacts (GTP-bound form) with NDE1; two RAB9A-GTP molecules lie on the opposite sides of the NDE1 homodimer; the interaction leads to RAB9A-dynein motor tethering. Interacts (GTP-bound form) with NDEL1. Mg(2+) is required as a cofactor.

Its subcellular location is the cell membrane. It localises to the endoplasmic reticulum membrane. The protein resides in the golgi apparatus membrane. The protein localises to the late endosome. It is found in the cytoplasmic vesicle. Its subcellular location is the phagosome membrane. It localises to the phagosome. The protein resides in the cytoplasmic vesicle membrane. The protein localises to the melanosome. It catalyses the reaction GTP + H2O = GDP + phosphate + H(+). Its activity is regulated as follows. Regulated by guanine nucleotide exchange factors (GEFs) which promote the exchange of bound GDP for free GTP. Regulated by GTPase activating proteins (GAPs) which increase the GTP hydrolysis activity. Inhibited by GDP dissociation inhibitors (GDIs). In terms of biological role, the small GTPases Rab are key regulators of intracellular membrane trafficking, from the formation of transport vesicles to their fusion with membranes. Rabs cycle between an inactive GDP-bound form and an active GTP-bound form that is able to recruit to membranes different sets of downstream effectors directly responsible for vesicle formation, movement, tethering and fusion. RAB9A is involved in the transport of proteins between the endosomes and the trans-Golgi network (TGN). Specifically uses NDE1/NDEL1 as an effector to interact with the dynein motor complex in order to control retrograde trafficking of RAB9-associated late endosomes to the TGN. Involved in the recruitment of SGSM2 to melanosomes and is required for the proper trafficking of melanogenic enzymes TYR, TYRP1 and DCT/TYRP2 to melanosomes in melanocytes. The chain is Ras-related protein Rab-9A (RAB9A) from Canis lupus familiaris (Dog).